Reading from the N-terminus, the 121-residue chain is Large ribosomal subunit protein uL14 (121 aa).

This sequence belongs to the universal ribosomal protein uL14 family. As to quaternary structure, part of the 50S ribosomal subunit. Forms a cluster with proteins L3 and L19. In the 70S ribosome, L14 and L19 interact and together make contacts with the 16S rRNA in bridges B5 and B8.

Functionally, binds to 23S rRNA. Forms part of two intersubunit bridges in the 70S ribosome. In Synechococcus sp. (strain CC9311), this protein is Large ribosomal subunit protein uL14.